The sequence spans 496 residues: Beta-amylase (496 aa).

Substrate contacts are provided by Asp54, His94, and Asp102. The active-site Proton donor is Glu187. Substrate contacts are provided by Lys296, His301, and Thr343. The active-site Proton acceptor is Glu381. Substrate contacts are provided by residues 382 to 383 (NA) and Arg421.

The protein belongs to the glycosyl hydrolase 14 family.

The enzyme catalyses Hydrolysis of (1-&gt;4)-alpha-D-glucosidic linkages in polysaccharides so as to remove successive maltose units from the non-reducing ends of the chains.. In Trifolium repens (Creeping white clover), this protein is Beta-amylase (BMY1).